A 358-amino-acid polypeptide reads, in one-letter code: Peptide chain release factor 1 (358 aa).

Position 233 is an N5-methylglutamine (Gln-233).

It belongs to the prokaryotic/mitochondrial release factor family. Post-translationally, methylated by PrmC. Methylation increases the termination efficiency of RF1.

It localises to the cytoplasm. Peptide chain release factor 1 directs the termination of translation in response to the peptide chain termination codons UAG and UAA. This Clostridium botulinum (strain ATCC 19397 / Type A) protein is Peptide chain release factor 1.